Reading from the N-terminus, the 620-residue chain is MAU2 chromatid cohesion factor homolog (620 aa).

TPR repeat units lie at residues glycine 452–glutamate 485 and serine 492–isoleucine 525.

It belongs to the SCC4/mau-2 family. Interacts with Nipped-B to form the cohesin loading complex.

Its subcellular location is the nucleus. It localises to the nucleoplasm. Functionally, required for association of the cohesin complex with chromatin during interphase. Plays a role in sister chromatid cohesion and normal progression through prometaphase. The chain is MAU2 chromatid cohesion factor homolog from Drosophila persimilis (Fruit fly).